Here is a 51-residue protein sequence, read N- to C-terminus: Ribosome biogenesis protein Nop10 (51 aa).

The protein belongs to the NOP10 family.

Involved in ribosome biogenesis; more specifically in 18S rRNA pseudouridylation and in cleavage of pre-rRNA. This chain is Ribosome biogenesis protein Nop10, found in Methanococcus maripaludis (strain C7 / ATCC BAA-1331).